A 453-amino-acid polypeptide reads, in one-letter code: Exopolyphosphatase PRUNE1 (453 aa).

Met-1 bears the N-acetylmethionine mark. The Mn(2+) site is built by Asp-28, Asp-30, Asp-106, and Asp-179. Residues 106 to 108 carry the DHH motif motif; that stretch reads DHH. Residues 393–420 are essential for homodimerization; that stretch reads SLLSGLSQDEEEPPLPPTPMNSLVDECP. The tract at residues 396-419 is disordered; the sequence is SGLSQDEEEPPLPPTPMNSLVDEC. Residue Ser-399 is modified to Phosphoserine. Thr-410 is modified (phosphothreonine). Ser-414 is subject to Phosphoserine.

The protein belongs to the PPase class C family. Prune subfamily. In terms of assembly, homooligomer. Able to homodimerize via its C-terminal domain. Interacts with NME1. Interacts with GSK3; at focal adhesion complexes where paxillin and vinculin are colocalized. It depends on Mn(2+) as a cofactor.

It localises to the cytoplasm. The protein resides in the nucleus. The protein localises to the cell junction. It is found in the focal adhesion. It carries out the reaction diphosphate + H2O = 2 phosphate + H(+). Activated by magnesium ions and inhibited by manganese ions. Inhibited by dipyridamole, moderately sensitive to IBMX and inhibited by vinpocetine. Phosphodiesterase (PDE) that has higher activity toward cAMP than cGMP, as substrate. Plays a role in cell proliferation, is able to induce cell motility and acts as a negative regulator of NME1. In Bos taurus (Bovine), this protein is Exopolyphosphatase PRUNE1 (PRUNE1).